A 192-amino-acid chain; its full sequence is Secreted and transmembrane protein 1A (192 aa).

Residues 1–27 (MMTCPSVPAIPTLWLFSILLLVVSLNA) form the signal peptide. The Extracellular segment spans residues 28–165 (QNKSWDNPIC…SSPIEGKPGT (138 aa)). Residues Asn29, Asn55, Asn84, and Asn127 are each glycosylated (N-linked (GlcNAc...) asparagine). Residues 166 to 186 (LVGVITVIFILGVAGFITFIY) form a helical membrane-spanning segment. The Cytoplasmic portion of the chain corresponds to 187–192 (YRHRRS).

The protein belongs to the SECTM family.

The protein resides in the cell membrane. Its subcellular location is the secreted. The chain is Secreted and transmembrane protein 1A from Mus musculus (Mouse).